The chain runs to 96 residues: Co-chaperonin GroES (96 aa).

The protein belongs to the GroES chaperonin family. In terms of assembly, heptamer of 7 subunits arranged in a ring. Interacts with the chaperonin GroEL.

It localises to the cytoplasm. Functionally, together with the chaperonin GroEL, plays an essential role in assisting protein folding. The GroEL-GroES system forms a nano-cage that allows encapsulation of the non-native substrate proteins and provides a physical environment optimized to promote and accelerate protein folding. GroES binds to the apical surface of the GroEL ring, thereby capping the opening of the GroEL channel. This is Co-chaperonin GroES from Syntrophomonas wolfei subsp. wolfei (strain DSM 2245B / Goettingen).